The chain runs to 61 residues: Alpha-conotoxin-like Sm1.1 (61 aa).

The first 16 residues, 1–16 (MFTVFLLVVLATTVVS), serve as a signal peptide directing secretion. Positions 17–43 (FPSDRASDGRDDEAKDERSDMHESGRK) are excised as a propeptide. The segment at 19-46 (SDRASDGRDDEAKDERSDMHESGRKGRG) is disordered. A compositionally biased stretch (basic and acidic residues) spans 21–42 (RASDGRDDEAKDERSDMHESGR). 2 disulfide bridges follow: Cys48–Cys53 and Cys49–Cys59. Pro55 carries the 4-hydroxyproline; partial modification. Cys59 is modified (cysteine amide).

It belongs to the conotoxin A superfamily. Expressed by the venom duct.

The protein localises to the secreted. Its function is as follows. Alpha-conotoxins act on postsynaptic membranes, they bind to the nicotinic acetylcholine receptors (nAChR) and thus inhibit them. The chain is Alpha-conotoxin-like Sm1.1 from Conus stercusmuscarum (Fly-specked cone).